We begin with the raw amino-acid sequence, 108 residues long: Urease subunit gamma (108 aa).

Belongs to the urease gamma subunit family. As to quaternary structure, heterotrimer of UreA (gamma), UreB (beta) and UreC (alpha) subunits. Three heterotrimers associate to form the active enzyme.

The protein localises to the cytoplasm. It catalyses the reaction urea + 2 H2O + H(+) = hydrogencarbonate + 2 NH4(+). Its pathway is nitrogen metabolism; urea degradation; CO(2) and NH(3) from urea (urease route): step 1/1. This Trichodesmium erythraeum (strain IMS101) protein is Urease subunit gamma.